A 608-amino-acid chain; its full sequence is Aspartate--tRNA(Asp/Asn) ligase (608 aa).

Glu-179 provides a ligand contact to L-aspartate. Residues 203-206 (QLFK) are aspartate. Arg-225 contacts L-aspartate. ATP-binding positions include 225–227 (RDE) and Gln-234. Residue His-461 participates in L-aspartate binding. Glu-494 lines the ATP pocket. Residue Arg-501 coordinates L-aspartate. Residue 546–549 (GLDR) participates in ATP binding.

Belongs to the class-II aminoacyl-tRNA synthetase family. Type 1 subfamily. Homodimer.

It localises to the cytoplasm. It carries out the reaction tRNA(Asx) + L-aspartate + ATP = L-aspartyl-tRNA(Asx) + AMP + diphosphate. Functionally, aspartyl-tRNA synthetase with relaxed tRNA specificity since it is able to aspartylate not only its cognate tRNA(Asp) but also tRNA(Asn). Reaction proceeds in two steps: L-aspartate is first activated by ATP to form Asp-AMP and then transferred to the acceptor end of tRNA(Asp/Asn). This is Aspartate--tRNA(Asp/Asn) ligase from Psychrobacter arcticus (strain DSM 17307 / VKM B-2377 / 273-4).